The sequence spans 530 residues: MVRRGLLGWISRVVILLVLLCCAISVLYMLACTPKGDQEQLGLPRANGPTGKDGYQAVLQEREEQHRNYVNSLKRQIAQLKDELQARSEQFRSGQDQASDATSLRSGWDREPKAQADLLAFLRGQVDKAEVHAGVKLATEYAAVPFDSFTLQKVYQLETGLTRHPEEKPVRKDKRDELVEAIESALESLNSPVESSPHQRPYTAADFIEGIYRTERDKGTLYELTFKGDHKHEFQRLVLFRPFGPIMKVKKEKLNLANTLINVIVPLARRVDKFRHFMQNFREMCIQQDGRVHLTVVYFGKEEMNEVKGILENTSKAANFRNFTFIQLNGEFSRGKGLDVGARFWKGSNVLLFFCDVDIYFTSEFLNTCRLNTQPGKKVFYPVLFSQYNPGVIYGHHDAVPPLGQQLVIKKETGFWRDFGFGMTCQYRSDFINIGGFDLDIKGWGGEDVHLYRKYLHSNLIVVRTPVRGLFHLWHEKHCMDELTPEQYKMCMQSKAMNEASHGQLGMLVFRHEIEAHLRKQKQKASSKKT.

The Cytoplasmic segment spans residues 1-12 (MVRRGLLGWISR). The helical; Signal-anchor for type II membrane protein transmembrane segment at 13–33 (VVILLVLLCCAISVLYMLACT) threads the bilayer. Residues 34-530 (PKGDQEQLGL…QKQKASSKKT (497 aa)) are Lumenal-facing. Positions 57 to 93 (AVLQEREEQHRNYVNSLKRQIAQLKDELQARSEQFRS) form a coiled coil. Residues 88–107 (SEQFRSGQDQASDATSLRSG) are disordered. Residues 91 to 105 (FRSGQDQASDATSLR) show a composition bias toward polar residues. Residues Asn313 and Asn322 are each glycosylated (N-linked (GlcNAc...) asparagine). Asp358 and His475 together coordinate a divalent metal cation.

This sequence belongs to the chondroitin N-acetylgalactosaminyltransferase family.

The protein resides in the golgi apparatus. It localises to the golgi stack membrane. It catalyses the reaction 3-O-(beta-D-GlcA-(1-&gt;3)-beta-D-Gal-(1-&gt;3)-beta-D-Gal-(1-&gt;4)-beta-D-Xyl)-L-seryl-[protein] + UDP-N-acetyl-alpha-D-galactosamine = 3-O-(beta-D-GalNAc-(1-&gt;4)-beta-D-GlcA-(1-&gt;3)-beta-D-Gal-(1-&gt;3)-beta-D-Gal-(1-&gt;4)-beta-D-Xyl)-L-seryl-[protein] + UDP + H(+). Transfers 1,4-N-acetylgalactosamine (GalNAc) from UDP-GalNAc to the non-reducing end of glucuronic acid (GlcUA). Required for addition of the first GalNAc to the core tetrasaccharide linker and for elongation of chondroitin chains. Important role in chondroitin chain biosynthesis in cartilage formation, and subsequent endochondral ossification. Moreover, is involved in the metabolism of aggrecan. This Mus musculus (Mouse) protein is Chondroitin sulfate N-acetylgalactosaminyltransferase 1.